The following is a 478-amino-acid chain: Phosphatidylinositol 4-kinase type 2-alpha (478 aa).

M1 bears the N-acetylmethionine mark. A disordered region spans residues 1 to 57; the sequence is MDETSPLVSPERAQPPEYTFPSVSGAHFPQVPGGAVRVAAAGSGPSPPCSPGHDRER. Phosphoserine occurs at positions 5, 9, 43, 46, and 50. The segment covering 31–44 has biased composition (low complexity); sequence VPGGAVRVAAAGSG. A PI3K/PI4K catalytic domain is found at 123–452; it reads SIYPERIYQG…VQMPPVIVET (330 aa). The tract at residues 129–135 is G-loop; it reads IYQGSSG. Residues 130 to 136 and K151 each bind ATP; that span reads YQGSSGS. Residues 156–158 form an important for substrate binding region; sequence EPY. Residues 164-177 are important for interaction with membranes; it reads KWTKWLQKLCCPCC. Residues C173, C174, C176, and C177 are each lipidated (S-palmitoyl cysteine). Position 260–263 (260–263) interacts with ATP; that stretch reads QLFV. Residues 267–275 form an important for interaction with membranes region; the sequence is KDADYWLRR. The segment at 304 to 312 is catalytic loop; it reads RNTDRGNDN. Residues 343-363 form an activation loop region; sequence AIDNGLAFPLKHPDSWRAYPF. ATP is bound at residue D345. The interval 358–367 is important for interaction with membranes; the sequence is WRAYPFYWAW. S461 is modified (phosphoserine).

The protein belongs to the PI3/PI4-kinase family. Type II PI4K subfamily. In terms of assembly, associates with the BLOC-1 and the AP-3 complexes; the BLOC-1 complex is required for optimal binding of PI4K2A to the AP-3 complex. Interacts with BLOC1S5 and DTNBP1. Interacts with FOS; this interaction may enhance phosphatidylinositol phosphorylation activity. Interacts with ITCH. Interacts with ATG9A. In terms of processing, ubiquitinated by ITCH; this does not lead to proteasomal degradation. Post-translationally, palmitoylated. Palmitoylated by ZDHHC3 and ZDHHC7 in the CCPCC motif. Palmitoylation is cholesterol-dependent, and required for TGN localization. As to expression, detected in adult brain, especially in neurons in the cerebellum, brain cortex, dorsal root ganglion and spinal cord (at protein level).

The protein localises to the golgi apparatus. The protein resides in the trans-Golgi network membrane. It is found in the membrane raft. Its subcellular location is the endosome. It localises to the endosome membrane. The protein localises to the cytoplasmic vesicle. The protein resides in the cell projection. It is found in the dendrite. Its subcellular location is the presynaptic cell membrane. It localises to the synapse. The protein localises to the synaptosome. The protein resides in the mitochondrion. It is found in the membrane. Its subcellular location is the cell membrane. It localises to the perikaryon. The protein localises to the neuron projection. The enzyme catalyses a 1,2-diacyl-sn-glycero-3-phospho-(1D-myo-inositol) + ATP = a 1,2-diacyl-sn-glycero-3-phospho-(1D-myo-inositol 4-phosphate) + ADP + H(+). In terms of biological role, membrane-bound phosphatidylinositol-4 kinase (PI4-kinase) that catalyzes the phosphorylation of phosphatidylinositol (PI) to phosphatidylinositol 4-phosphate (PI4P), a lipid that plays important roles in endocytosis, Golgi function, protein sorting and membrane trafficking and is required for prolonged survival of neurons. Besides, phosphorylation of phosphatidylinositol (PI) to phosphatidylinositol 4-phosphate (PI4P) is the first committed step in the generation of phosphatidylinositol 4,5-bisphosphate (PIP2), a precursor of the second messenger inositol 1,4,5-trisphosphate (InsP3). The polypeptide is Phosphatidylinositol 4-kinase type 2-alpha (Pi4k2a) (Rattus norvegicus (Rat)).